The primary structure comprises 586 residues: Phosphomethylpyrimidine synthase (586 aa).

Residues 1-58 are disordered; the sequence is MKQSVSAEQIELKSSLPGSKKVYVDGTREGMKVPMREIEQSDTNGVQNPPIRVYDTSG. Residues 22–39 show a composition bias toward basic and acidic residues; it reads VYVDGTREGMKVPMREIE. Substrate contacts are provided by residues Asn193, Met222, Tyr251, His287, 307–309, 348–351, and Glu387; these read SRG and DGLR. Residue His391 coordinates Zn(2+). Residue Tyr414 coordinates substrate. His455 is a Zn(2+) binding site. Cys535, Cys538, and Cys543 together coordinate [4Fe-4S] cluster.

The protein belongs to the ThiC family. [4Fe-4S] cluster serves as cofactor.

It catalyses the reaction 5-amino-1-(5-phospho-beta-D-ribosyl)imidazole + S-adenosyl-L-methionine = 4-amino-2-methyl-5-(phosphooxymethyl)pyrimidine + CO + 5'-deoxyadenosine + formate + L-methionine + 3 H(+). It participates in cofactor biosynthesis; thiamine diphosphate biosynthesis. Catalyzes the synthesis of the hydroxymethylpyrimidine phosphate (HMP-P) moiety of thiamine from aminoimidazole ribotide (AIR) in a radical S-adenosyl-L-methionine (SAM)-dependent reaction. The polypeptide is Phosphomethylpyrimidine synthase (Bacillus mycoides (strain KBAB4) (Bacillus weihenstephanensis)).